The following is a 201-amino-acid chain: Histidinol dehydrogenase (201 aa).

This sequence belongs to the histidinol dehydrogenase family. Homodimer. Zn(2+) serves as cofactor.

The catalysed reaction is L-histidinol + 2 NAD(+) + H2O = L-histidine + 2 NADH + 3 H(+). It participates in amino-acid biosynthesis; L-histidine biosynthesis; L-histidine from 5-phospho-alpha-D-ribose 1-diphosphate: step 9/9. Catalyzes the sequential NAD-dependent oxidations of L-histidinol to L-histidinaldehyde and then to L-histidine. This Buchnera aphidicola subsp. Schlechtendalia chinensis protein is Histidinol dehydrogenase (hisD).